The primary structure comprises 163 residues: Nucleotide-binding protein NFA_51200 (163 aa).

The protein belongs to the YajQ family.

In terms of biological role, nucleotide-binding protein. The chain is Nucleotide-binding protein NFA_51200 from Nocardia farcinica (strain IFM 10152).